A 291-amino-acid polypeptide reads, in one-letter code: Glycine--tRNA ligase alpha subunit (291 aa).

Belongs to the class-II aminoacyl-tRNA synthetase family. As to quaternary structure, tetramer of two alpha and two beta subunits.

It is found in the cytoplasm. It carries out the reaction tRNA(Gly) + glycine + ATP = glycyl-tRNA(Gly) + AMP + diphosphate. This chain is Glycine--tRNA ligase alpha subunit, found in Trichlorobacter lovleyi (strain ATCC BAA-1151 / DSM 17278 / SZ) (Geobacter lovleyi).